A 61-amino-acid chain; its full sequence is Probable tautomerase LMOf2365_2536 (61 aa).

Pro-2 serves as the catalytic Proton acceptor; via imino nitrogen.

It belongs to the 4-oxalocrotonate tautomerase family.

This chain is Probable tautomerase LMOf2365_2536, found in Listeria monocytogenes serotype 4b (strain F2365).